Reading from the N-terminus, the 240-residue chain is Superoxide dismutase [Cu-Zn] (240 aa).

Positions 1–32 (MPKPADHRNHAAVSTSVLSALFLGAGAALLSA) are cleaved as a signal peptide. Cys-33 is lipidated: N-palmitoyl cysteine. A lipid anchor (S-diacylglycerol cysteine) is attached at Cys-33. 2 stretches are compositionally biased toward polar residues: residues 36–51 (PQHASTVPGTTPSIWT) and 68–77 (GAQSLTSTLT). The disordered stretch occupies residues 36 to 77 (PQHASTVPGTTPSIWTGSPAPSGLSGHDEESPGAQSLTSTLT). 2 residues coordinate Cu cation: His-116 and His-118. A disulfide bridge links Cys-123 with Cys-234. Zn(2+) contacts are provided by His-146 and Asp-158. Residue His-195 participates in Cu cation binding.

The protein belongs to the Cu-Zn superoxide dismutase family. Cu cation serves as cofactor. It depends on Zn(2+) as a cofactor.

It is found in the cell membrane. It carries out the reaction 2 superoxide + 2 H(+) = H2O2 + O2. With respect to regulation, inhibited by the copper chelator diethyl dithiocarbamate. In terms of biological role, destroys radicals which are normally produced within the cells and which are toxic to biological systems. May play a role in favoring mycobacterial survival in phagocytes. In Mycobacterium bovis (strain ATCC BAA-935 / AF2122/97), this protein is Superoxide dismutase [Cu-Zn] (sodC).